The following is a 265-amino-acid chain: Urease accessory protein UreH (265 aa).

Belongs to the UreD family. UreH, UreF and UreG form a complex that acts as a GTP-hydrolysis-dependent molecular chaperone, activating the urease apoprotein by helping to assemble the nickel containing metallocenter of UreC. The UreE protein probably delivers the nickel.

The protein resides in the cytoplasm. Functionally, required for maturation of urease via the functional incorporation of the urease nickel metallocenter. This chain is Urease accessory protein UreH, found in Helicobacter pylori (strain P12).